Consider the following 229-residue polypeptide: 2,3-bisphosphoglycerate-dependent phosphoglycerate mutase (229 aa).

Substrate contacts are provided by residues 8-15 (RHGESAWN), 21-22 (TG), arginine 60, 87-90 (ERHY), lysine 98, 114-115 (RR), and 183-184 (GN). Histidine 9 functions as the Tele-phosphohistidine intermediate in the catalytic mechanism. The active-site Proton donor/acceptor is the glutamate 87.

The protein belongs to the phosphoglycerate mutase family. BPG-dependent PGAM subfamily. Homodimer.

The enzyme catalyses (2R)-2-phosphoglycerate = (2R)-3-phosphoglycerate. The protein operates within carbohydrate degradation; glycolysis; pyruvate from D-glyceraldehyde 3-phosphate: step 3/5. Its function is as follows. Catalyzes the interconversion of 2-phosphoglycerate and 3-phosphoglycerate. This Polynucleobacter necessarius subsp. necessarius (strain STIR1) protein is 2,3-bisphosphoglycerate-dependent phosphoglycerate mutase.